A 233-amino-acid chain; its full sequence is Phosphoribosylformylglycinamidine synthase subunit PurQ (233 aa).

Positions 3–233 (SAILVFPGIN…GLVEHLAKAA (231 aa)) constitute a Glutamine amidotransferase type-1 domain. Catalysis depends on Cys87, which acts as the Nucleophile. Residues His204 and Glu206 contribute to the active site.

As to quaternary structure, part of the FGAM synthase complex composed of 1 PurL, 1 PurQ and 2 PurS subunits.

The protein resides in the cytoplasm. It carries out the reaction N(2)-formyl-N(1)-(5-phospho-beta-D-ribosyl)glycinamide + L-glutamine + ATP + H2O = 2-formamido-N(1)-(5-O-phospho-beta-D-ribosyl)acetamidine + L-glutamate + ADP + phosphate + H(+). The enzyme catalyses L-glutamine + H2O = L-glutamate + NH4(+). It functions in the pathway purine metabolism; IMP biosynthesis via de novo pathway; 5-amino-1-(5-phospho-D-ribosyl)imidazole from N(2)-formyl-N(1)-(5-phospho-D-ribosyl)glycinamide: step 1/2. Its function is as follows. Part of the phosphoribosylformylglycinamidine synthase complex involved in the purines biosynthetic pathway. Catalyzes the ATP-dependent conversion of formylglycinamide ribonucleotide (FGAR) and glutamine to yield formylglycinamidine ribonucleotide (FGAM) and glutamate. The FGAM synthase complex is composed of three subunits. PurQ produces an ammonia molecule by converting glutamine to glutamate. PurL transfers the ammonia molecule to FGAR to form FGAM in an ATP-dependent manner. PurS interacts with PurQ and PurL and is thought to assist in the transfer of the ammonia molecule from PurQ to PurL. In Rhodopseudomonas palustris (strain BisB18), this protein is Phosphoribosylformylglycinamidine synthase subunit PurQ.